A 447-amino-acid chain; its full sequence is Naphthalene 1,2-dioxygenase system, large oxygenase component (447 aa).

Residues 37 to 135 form the Rieske domain; that stretch reads WLFLTHDSLI…IKKKCLGLKE (99 aa). [2Fe-2S] cluster is bound by residues Cys79, His81, Cys99, and His102. Fe cation contacts are provided by His206, His211, and Asp360.

This sequence belongs to the bacterial ring-hydroxylating dioxygenase alpha subunit family. As to quaternary structure, the naphthalene dioxygenase (NDO) multicomponent enzyme system is composed of an electron transfer component and a dioxygenase component (iron sulfur protein (ISP)). The electron transfer component is composed of a ferredoxin reductase (NagAa) and a ferredoxin (NagAb), and the dioxygenase component is formed by a large alpha subunit (NagAc) and a small beta subunit (NagAd). The cofactor is [2Fe-2S] cluster. Fe(2+) serves as cofactor.

The enzyme catalyses naphthalene + NADH + O2 + H(+) = (1R,2S)-1,2-dihydronaphthalene-1,2-diol + NAD(+). The protein operates within aromatic compound metabolism; naphthalene degradation. Its function is as follows. Component of the naphthalene dioxygenase (NDO) multicomponent enzyme system which catalyzes the incorporation of both atoms of molecular oxygen into naphthalene to form cis-(1R,2S)-dihydroxy-1,2-dihydronaphthalene. The alpha subunit has a catalytic role in the holoenzyme. Also able to use styrene as substrate. The sequence is that of Naphthalene 1,2-dioxygenase system, large oxygenase component from Ralstonia sp.